Consider the following 29-residue polypeptide: Cuticle protein 36 (29 aa).

Its function is as follows. Component of the cuticle of migratory locust which contains more than 100 different structural proteins. The protein is Cuticle protein 36 of Locusta migratoria (Migratory locust).